The following is a 64-amino-acid chain: Large ribosomal subunit protein bL28 (64 aa).

Residues 1–26 form a disordered region; sequence MARRDQLTGKGPLSGNTRSHAMNHSK.

Belongs to the bacterial ribosomal protein bL28 family.

The sequence is that of Large ribosomal subunit protein bL28 from Ureaplasma urealyticum serovar 10 (strain ATCC 33699 / Western).